Consider the following 546-residue polypeptide: MTTEKRQILVTAALPYANGPIHLGHMVEHIQADIWVRFQRLKGNDCLFICGEDAHGTAIMITAQKQGLPPEALVAKMHKEHARDLGGFLIEYDNFYTTHSPENRELAELIYTRLKDKGDIFAKTISQAYDPVKEIFLPDRFIRGTCPRCGAKDQYGDVCEVCGATYSPTELIDPVSALSGAKPIEKNSEHFFFSLNRYTQLLKKWIDAGHLQPQVANKLKEWFSEDLKPWDISRDAPYFGFEIPHAANKYFYVWLDAPIGYMASLKNLSKQRPSVNFDAYWKEGSQTELYHFVGKDIVYFHALFWPAMLSGAGFRLPTTIYVHGYLTVNGQKMSKSRGTFITAHHYLDHLSPEYLRYYYAAKLSAQVEDIDLNLDDFIQRVNADLIGKYVNLASRCAGFITKNFGGKLANELPEPDLYESFLQTEQTITDYYESLNYSKAVRVIMSLADRANQYIDAKKPWALAKEINQEAQVQAVCTQGLNLFKILTTYLKPILPVTAKKVEQFLNCDELNFANLKTPLLDHSVNPFEPLMQRLLPETAAQLTHE.

A 'HIGH' region motif is present at residues Pro15 to His25. Zn(2+) contacts are provided by Cys146, Cys149, Cys159, and Cys162. Residues Lys332–Ser336 carry the 'KMSKS' region motif. Lys335 serves as a coordination point for ATP.

The protein belongs to the class-I aminoacyl-tRNA synthetase family. MetG type 1 subfamily. Monomer. Requires Zn(2+) as cofactor.

The protein resides in the cytoplasm. The catalysed reaction is tRNA(Met) + L-methionine + ATP = L-methionyl-tRNA(Met) + AMP + diphosphate. Its function is as follows. Is required not only for elongation of protein synthesis but also for the initiation of all mRNA translation through initiator tRNA(fMet) aminoacylation. The chain is Methionine--tRNA ligase from Coxiella burnetii (strain RSA 331 / Henzerling II).